Here is a 329-residue protein sequence, read N- to C-terminus: Glyceraldehyde-3-phosphate dehydrogenase 1 (329 aa).

NAD(+) is bound by residues 11–12 (RI), aspartate 33, and glutamate 77. The residue at position 148 (serine 148) is a Phosphoserine. 148-150 (SCT) contributes to the D-glyceraldehyde 3-phosphate binding site. The Nucleophile role is filled by cysteine 149. Serine 177 carries the post-translational modification Phosphoserine. Threonine 179 is a D-glyceraldehyde 3-phosphate binding site. Serine 200 bears the Phosphoserine mark. Residues 208–209 (TG) and arginine 231 contribute to the D-glyceraldehyde 3-phosphate site. Residue asparagine 313 participates in NAD(+) binding.

It belongs to the glyceraldehyde-3-phosphate dehydrogenase family. Homotetramer.

The protein localises to the cytoplasm. It carries out the reaction D-glyceraldehyde 3-phosphate + phosphate + NAD(+) = (2R)-3-phospho-glyceroyl phosphate + NADH + H(+). It functions in the pathway carbohydrate degradation; glycolysis; pyruvate from D-glyceraldehyde 3-phosphate: step 1/5. In Kluyveromyces marxianus (Yeast), this protein is Glyceraldehyde-3-phosphate dehydrogenase 1.